We begin with the raw amino-acid sequence, 693 residues long: Polyribonucleotide nucleotidyltransferase (693 aa).

Mg(2+) contacts are provided by D486 and D492. Positions 553–612 constitute a KH domain; it reads PRFTTLKIHPDKIRDVIGKGGATIRALTEETGTSIDISDDGTVKIASVDKAAGDEARRRI. The 69-residue stretch at 622 to 690 folds into the S1 motif domain; the sequence is GRIYEGRVVK…KQGRIRLSMK (69 aa).

Belongs to the polyribonucleotide nucleotidyltransferase family. Component of the RNA degradosome, which is a multiprotein complex involved in RNA processing and mRNA degradation. The cofactor is Mg(2+).

Its subcellular location is the cytoplasm. The enzyme catalyses RNA(n+1) + phosphate = RNA(n) + a ribonucleoside 5'-diphosphate. In terms of biological role, involved in mRNA degradation. Catalyzes the phosphorolysis of single-stranded polyribonucleotides processively in the 3'- to 5'-direction. This is Polyribonucleotide nucleotidyltransferase from Thioalkalivibrio sulfidiphilus (strain HL-EbGR7).